A 424-amino-acid polypeptide reads, in one-letter code: UDP-N-acetylglucosamine 1-carboxyvinyltransferase (424 aa).

Phosphoenolpyruvate is bound at residue 22-23 (KN). Arg93 serves as a coordination point for UDP-N-acetyl-alpha-D-glucosamine. The active-site Proton donor is the Cys117. Cys117 carries the 2-(S-cysteinyl)pyruvic acid O-phosphothioketal modification. UDP-N-acetyl-alpha-D-glucosamine-binding positions include 162–165 (KVSV), Asp307, and Ile329.

This sequence belongs to the EPSP synthase family. MurA subfamily.

It is found in the cytoplasm. The enzyme catalyses phosphoenolpyruvate + UDP-N-acetyl-alpha-D-glucosamine = UDP-N-acetyl-3-O-(1-carboxyvinyl)-alpha-D-glucosamine + phosphate. The protein operates within cell wall biogenesis; peptidoglycan biosynthesis. Cell wall formation. Adds enolpyruvyl to UDP-N-acetylglucosamine. This is UDP-N-acetylglucosamine 1-carboxyvinyltransferase from Glaesserella parasuis serovar 5 (strain SH0165) (Haemophilus parasuis).